A 494-amino-acid chain; its full sequence is Vacuolar-processing enzyme (494 aa).

The signal sequence occupies residues 1–20; that stretch reads MTRLASGVLITLLVALAGIA. A glycan (N-linked (GlcNAc...) asparagine) is linked at N151. H178 is a catalytic residue. Residue C220 is the Nucleophile of the active site. C253 and C267 are disulfide-bonded. N-linked (GlcNAc...) asparagine glycosylation is present at N336. Disulfide bonds link C430–C460 and C442–C477.

Belongs to the peptidase C13 family. In terms of tissue distribution, high levels are seen in the flowers, a lower level expression is seen in the leaves, while very low levels are seen in the stems and roots.

Its function is as follows. Asparagine-specific endopeptidase that may be involved in processing of proteins targeted to vacuoles that accumulate during ethylene-regulated processes such as flower opening and flavedo degreening. In Citrus sinensis (Sweet orange), this protein is Vacuolar-processing enzyme.